The primary structure comprises 717 residues: Catalase-peroxidase (717 aa).

The interval 1–20 is disordered; sequence MSGKCPVMHGGNTSTGTSNK. The segment covering 11 to 20 has biased composition (polar residues); it reads GNTSTGTSNK. Residues 91–219 constitute a cross-link (tryptophyl-tyrosyl-methioninium (Trp-Tyr) (with M-245)); that stretch reads WHSAGSYRLA…LAAVQMGLIY (129 aa). The active-site Proton acceptor is the His-92. The tryptophyl-tyrosyl-methioninium (Tyr-Met) (with W-91) cross-link spans 219-245; the sequence is YVNPEGVNGQPDPQKTAEQVRETFARM. Position 260 (His-260) interacts with heme b.

It belongs to the peroxidase family. Peroxidase/catalase subfamily. In terms of assembly, homodimer or homotetramer. The cofactor is heme b. Post-translationally, formation of the three residue Trp-Tyr-Met cross-link is important for the catalase, but not the peroxidase activity of the enzyme.

The enzyme catalyses H2O2 + AH2 = A + 2 H2O. The catalysed reaction is 2 H2O2 = O2 + 2 H2O. Functionally, bifunctional enzyme with both catalase and broad-spectrum peroxidase activity. This Chromohalobacter salexigens (strain ATCC BAA-138 / DSM 3043 / CIP 106854 / NCIMB 13768 / 1H11) protein is Catalase-peroxidase.